The sequence spans 409 residues: Putative competence-damage inducible protein (409 aa).

The protein belongs to the CinA family.

In Clostridium botulinum (strain 657 / Type Ba4), this protein is Putative competence-damage inducible protein.